Consider the following 300-residue polypeptide: UDP-3-O-acyl-N-acetylglucosamine deacetylase (300 aa).

Residues H76, H235, and D239 each contribute to the Zn(2+) site. H262 functions as the Proton donor in the catalytic mechanism.

Belongs to the LpxC family. It depends on Zn(2+) as a cofactor.

It carries out the reaction a UDP-3-O-[(3R)-3-hydroxyacyl]-N-acetyl-alpha-D-glucosamine + H2O = a UDP-3-O-[(3R)-3-hydroxyacyl]-alpha-D-glucosamine + acetate. It participates in glycolipid biosynthesis; lipid IV(A) biosynthesis; lipid IV(A) from (3R)-3-hydroxytetradecanoyl-[acyl-carrier-protein] and UDP-N-acetyl-alpha-D-glucosamine: step 2/6. Functionally, catalyzes the hydrolysis of UDP-3-O-myristoyl-N-acetylglucosamine to form UDP-3-O-myristoylglucosamine and acetate, the committed step in lipid A biosynthesis. The polypeptide is UDP-3-O-acyl-N-acetylglucosamine deacetylase (Halorhodospira halophila (strain DSM 244 / SL1) (Ectothiorhodospira halophila (strain DSM 244 / SL1))).